A 512-amino-acid chain; its full sequence is MANPNLKQVNIQNNATFPHQQNVTRSTESPGDPKETMEAVAPSPQDPSSANSEPQEMTVDIKNFRRPGEKTFTQRCRLFVGNLPSDMADEDFKKLFFKYGDAKEVFINRDRGFGFIRLETRTLAEIAKAELDGTVLGNRPIRIRFATHGAALTVRNLSPVVSNELLEQAFSQFGPVERAIVIVDDRGRPTGKGIVEFANKPAARKALDHCADGALLLTTSPRPVILEPTEQYDDEDGLPEKLLQKSAQYHKEREHKPHFAQPGTFEFEYSSRWKALDEMDKQQREQVERNIQEAKEKLETEMEAAKQEHQLMMMRQDLMRRQEELRRLEELRNQELQKRKQIELRHEEERRRREEDMIRHREQLDIRRQPDGFKSGFMESREQDMRMNEMGTRGAINIGDSFNPVTAISGNQGPTQMMGMGGRVGAMGPDGSSKMIPDNGVMPNERFSEGGPLQMGSPVGGQTGVDSPQPQQHSPMLVGAGSVPGVLGQSGFGRGSPVGGSFDGPNNKRRRY.

2 stretches are compositionally biased toward polar residues: residues 1–29 and 46–55; these read MANP…STES and DPSSANSEPQ. The interval 1–56 is disordered; sequence MANPNLKQVNIQNNATFPHQQNVTRSTESPGDPKETMEAVAPSPQDPSSANSEPQE. 2 consecutive RRM domains span residues 76–148 and 150–231; these read CRLF…FATH and AALT…PTEQ. Residues 276–366 adopt a coiled-coil conformation; that stretch reads LDEMDKQQRE…MIRHREQLDI (91 aa). Positions 451-512 are disordered; it reads GPLQMGSPVG…DGPNNKRRRY (62 aa). Residues 464 to 474 are compositionally biased toward polar residues; sequence GVDSPQPQQHS. A compositionally biased stretch (gly residues) spans 488-502; it reads GQSGFGRGSPVGGSF.

Belongs to the PSPC family.

The protein resides in the nucleus speckle. RNA-binding protein required for the formation of nuclear paraspeckles. Binds to poly(A), poly(G) and poly(U) RNA homopolymers. The polypeptide is Paraspeckle component 1 (pspc1) (Danio rerio (Zebrafish)).